The sequence spans 377 residues: 23S rRNA (uracil(747)-C(5))-methyltransferase RlmC (377 aa).

[4Fe-4S] cluster-binding residues include Cys-3, Cys-11, Cys-14, and Cys-87. Residues Gln-212, Phe-241, Glu-262, and Asn-307 each contribute to the S-adenosyl-L-methionine site. Cys-334 serves as the catalytic Nucleophile.

Belongs to the class I-like SAM-binding methyltransferase superfamily. RNA M5U methyltransferase family. RlmC subfamily.

The catalysed reaction is uridine(747) in 23S rRNA + S-adenosyl-L-methionine = 5-methyluridine(747) in 23S rRNA + S-adenosyl-L-homocysteine + H(+). Catalyzes the formation of 5-methyl-uridine at position 747 (m5U747) in 23S rRNA. This chain is 23S rRNA (uracil(747)-C(5))-methyltransferase RlmC, found in Photorhabdus laumondii subsp. laumondii (strain DSM 15139 / CIP 105565 / TT01) (Photorhabdus luminescens subsp. laumondii).